Here is a 230-residue protein sequence, read N- to C-terminus: L-aspartate/glutamate-specific racemase (230 aa).

Substrate is bound by residues Met-10, Gln-52, and 83–85 (TNT). Thr-83 functions as the Proton donor in the catalytic mechanism. Cys-197 acts as the Proton acceptor in catalysis. 198 to 199 (TE) serves as a coordination point for substrate.

It belongs to the aspartate/glutamate racemases family. Homodimer.

It catalyses the reaction L-glutamate = D-glutamate. The enzyme catalyses L-aspartate = D-aspartate. Exhibits racemase activity for both L-glutamate and L-aspartate. The sequence is that of L-aspartate/glutamate-specific racemase from Escherichia coli O157:H7.